A 93-amino-acid polypeptide reads, in one-letter code: UPF0728 protein C10orf53 homolog (93 aa).

Belongs to the UPF0728 family.

This is UPF0728 protein C10orf53 homolog from Bos taurus (Bovine).